We begin with the raw amino-acid sequence, 238 residues long: Histone deacetylase 7 (238 aa).

Disordered regions lie at residues 1–26 (TPGS…PEPA) and 47–72 (QQQR…GQQE). Residues 58–158 (SMDPPLPELQ…LPTEPPEHFP (101 aa)) form an interaction with MEF2A region. 2 positions are modified to phosphoserine: S118 and S164. The tract at residues 145 to 238 (PVPSLPTEPP…NPALGSEADG (94 aa)) is disordered. A compositionally biased stretch (basic and acidic residues) spans 176-190 (KSLERRKNPLLRKES). A Phosphoserine; by PKD/PRKD2 modification is found at S190. The span at 206–221 (SSPSSSSTPASGCSSP) shows a compositional bias: low complexity.

It belongs to the histone deacetylase family. HD type 2 subfamily. Interacts with HDAC1, HDAC2, HDAC3, HDAC4, HDAC5, NCOR1, NCOR2, SIN3A, SIN3B, RBBP4, RBBP7, MTA1L1, SAP30 and MBD3. Interacts with KAT5 and EDNRA. Interacts with the 14-3-3 protein YWHAE, MEF2A, MEF2B and MEF2C. Interacts with ZMYND15. Interacts with KDM5B. Interacts with PML. Interacts with FOXP3. Interacts with RARA. Post-translationally, may be phosphorylated by CaMK1. Phosphorylated by the PKC kinases PKN1 and PKN2, impairing nuclear import. Phosphorylation at Ser-164 by MARK2, MARK3 and PRKD1 promotes interaction with 14-3-3 proteins and export from the nucleus. Phosphorylation at Ser-164 is a prerequisite for phosphorylation at Ser-190.

It localises to the nucleus. Its subcellular location is the cytoplasm. It carries out the reaction N(6)-acetyl-L-lysyl-[histone] + H2O = L-lysyl-[histone] + acetate. It catalyses the reaction N(6)-acetyl-L-lysyl-[protein] + H2O = L-lysyl-[protein] + acetate. Its function is as follows. Responsible for the deacetylation of lysine residues on the N-terminal part of the core histones (H2A, H2B, H3 and H4). Histone deacetylation gives a tag for epigenetic repression and plays an important role in transcriptional regulation, cell cycle progression and developmental events. Histone deacetylases act via the formation of large multiprotein complexes. Involved in muscle maturation by repressing transcription of myocyte enhancer factors such as MEF2A, MEF2B and MEF2C. During muscle differentiation, it shuttles into the cytoplasm, allowing the expression of myocyte enhancer factors. May be involved in Epstein-Barr virus (EBV) latency, possibly by repressing the viral BZLF1 gene. Positively regulates the transcriptional repressor activity of FOXP3. Serves as a corepressor of RARA, causing its deacetylation and inhibition of RARE DNA element binding. In association with RARA, plays a role in the repression of microRNA-10a and thereby in the inflammatory response. Also acetylates non-histone proteins, such as ALKBH5. In Rattus norvegicus (Rat), this protein is Histone deacetylase 7 (Hdac7).